The sequence spans 217 residues: MSGGLAPSKSTVYVSNLPFSLTNNDLYRIFSKYGKVVKVTIMKDKDTRKSKGVAFILFLDKDSALNCTRAINNKQLFGRVIKASIAIDNGRAAEFIRRRNYFDKSKCYECGESGHLSYACPKNMLGEREPPKKKEKKKKKKVPEPEEEIEEVEVSEEEGEDPALDSLSQAIAFQQAKIEEEQNKWRPSTGGPSTSDDSRRPRIKKSAYFSDEEELSD.

The region spanning 10–88 is the RRM domain; the sequence is STVYVSNLPF…RVIKASIAID (79 aa). The CCHC-type zinc finger occupies 105 to 122; that stretch reads SKCYECGESGHLSYACPK. The disordered stretch occupies residues 120–217; it reads CPKNMLGERE…YFSDEEELSD (98 aa). The segment covering 145–163 has biased composition (acidic residues); it reads PEEEIEEVEVSEEEGEDPA. S155, S210, and S216 each carry phosphoserine.

As to quaternary structure, component of the U11/U12 snRNPs that are part of the U12-type spliceosome. Interacts with ZRSR1.

Its subcellular location is the nucleus. The protein localises to the nucleoplasm. In Rattus norvegicus (Rat), this protein is Zinc finger CCHC-type and RNA-binding motif-containing protein 1 (Zcrb1).